Reading from the N-terminus, the 361-residue chain is Phosphoserine aminotransferase (361 aa).

Residue R42 participates in L-glutamate binding. Residues 76-77 (AT), W102, T152, D172, and Q195 each bind pyridoxal 5'-phosphate. At K196 the chain carries N6-(pyridoxal phosphate)lysine. 237–238 (NT) contributes to the pyridoxal 5'-phosphate binding site.

This sequence belongs to the class-V pyridoxal-phosphate-dependent aminotransferase family. SerC subfamily. Homodimer. Pyridoxal 5'-phosphate is required as a cofactor.

It localises to the cytoplasm. It carries out the reaction O-phospho-L-serine + 2-oxoglutarate = 3-phosphooxypyruvate + L-glutamate. The enzyme catalyses 4-(phosphooxy)-L-threonine + 2-oxoglutarate = (R)-3-hydroxy-2-oxo-4-phosphooxybutanoate + L-glutamate. It participates in amino-acid biosynthesis; L-serine biosynthesis; L-serine from 3-phospho-D-glycerate: step 2/3. The protein operates within cofactor biosynthesis; pyridoxine 5'-phosphate biosynthesis; pyridoxine 5'-phosphate from D-erythrose 4-phosphate: step 3/5. In terms of biological role, catalyzes the reversible conversion of 3-phosphohydroxypyruvate to phosphoserine and of 3-hydroxy-2-oxo-4-phosphonooxybutanoate to phosphohydroxythreonine. This chain is Phosphoserine aminotransferase, found in Stenotrophomonas maltophilia (strain R551-3).